Reading from the N-terminus, the 95-residue chain is Feather keratin B-4 (95 aa).

At Ser-1 the chain carries N-acetylserine.

The protein belongs to the avian keratin family. As to quaternary structure, the avian keratins (F-ker, S-ker, C-ker and B-ker) are a complex mixture of very similar polypeptides.

This chain is Feather keratin B-4, found in Anas platyrhynchos (Mallard).